A 61-amino-acid polypeptide reads, in one-letter code: Conotoxin Cal14.6 (61 aa).

A signal peptide spans 1–21 (MKFLLFLSVALLLTSFIETEA). A propeptide spanning residues 22 to 38 (GPVNEAGVERLFRALVG) is cleaved from the precursor. Residue proline 57 is modified to 4-hydroxyproline; partial. Proline 60 bears the Proline amide mark.

Contains 2 disulfide bonds. In terms of tissue distribution, expressed by the venom duct.

It localises to the secreted. Functionally, probable neurotoxin with unknown target. Possibly targets ion channels. The chain is Conotoxin Cal14.6 from Californiconus californicus (California cone).